Reading from the N-terminus, the 538-residue chain is Chaperonin GroEL (538 aa).

ATP contacts are provided by residues 29 to 32 (TLGP), 86 to 90 (DGTTT), G413, 477 to 479 (NAA), and D493.

This sequence belongs to the chaperonin (HSP60) family. In terms of assembly, forms a cylinder of 14 subunits composed of two heptameric rings stacked back-to-back. Interacts with the co-chaperonin GroES.

It localises to the cytoplasm. It catalyses the reaction ATP + H2O + a folded polypeptide = ADP + phosphate + an unfolded polypeptide.. Together with its co-chaperonin GroES, plays an essential role in assisting protein folding. The GroEL-GroES system forms a nano-cage that allows encapsulation of the non-native substrate proteins and provides a physical environment optimized to promote and accelerate protein folding. The sequence is that of Chaperonin GroEL from Bifidobacterium adolescentis (strain ATCC 15703 / DSM 20083 / NCTC 11814 / E194a).